We begin with the raw amino-acid sequence, 530 residues long: S-adenosylhomocysteine hydrolase-like protein 1 (530 aa).

Residue M1 is modified to N-acetylmethionine. N-acetylserine is present on S2. At S2 the chain carries Phosphoserine. K40 carries the post-translational modification N6-acetyllysine. A disordered region spans residues 53–103; sequence KFPTKTGRRSLSRSISQSSTDSYSSAASYTDSSDDEVSPREKQQTNSKGSS. The segment covering 64 to 83 has biased composition (low complexity); sequence SRSISQSSTDSYSSAASYTD. Residues 65 to 92 are PEST; sequence RSISQSSTDSYSSAASYTDSSDDEVSPR. Phosphoserine is present on residues S68, S71, S74, S77, and S84. An interaction with BCL2L10 region spans residues 138-201; the sequence is QGEKPLAGAK…EAGVAVFAWK (64 aa). Substrate is bound by residues T155, D229, E254, K284, and D288. Residues 281 to 448 are NAD binding; sequence SVTKQKFDNL…EGRLLNLSCS (168 aa). NAD(+) contacts are provided by residues 318-322, E341, and N376; that span reads GYGEV. At S391 the chain carries Phosphoserine. 397–399 is an NAD(+) binding site; sequence MGH. Residues 520–530 are PDZ-binding; it reads NGPFKPNYYRY.

Belongs to the adenosylhomocysteinase family. Forms multimers. Forms heteromultimers with AHCYL2 (via the C-terminal region). Interacts (when phosphorylated) with ITPR1 (when not phosphorylated); the interaction suppresses inositol 1,4,5-trisphosphate binding to ITPR1. Interacts with BCL2L10; this strengthens the interaction of AHCYL1 with ITPR1. Interacts with CFTR and SLC26A6; the interactions take place once AHCYL1 is released from ITPR1 and increase CFTR and SLC26A6 activities. Interacts with RRM1; in a phosphorylation- and (dATP)-dependent manner. Interacts (via PEST domain when phosphorylated) with SLC4A4 isoform 1 but not isoform 2; the interaction increases SLC4A4 isoform 1 activity. Interacts (when phosphorylated) with SLC9A3; the interaction is required for SLC9A3 apical location and activity. Interacts (when phosphorylated) with FIP1L1; the interaction is direct and associates AHCYL1 with the CPSF complex and RNA. Interacts with PAPOLA. Interacts with ZCCHC4. Interacts with AHCY. Requires NAD(+) as cofactor. Phosphorylated at Ser/Thr residues between Ser-68 and Thr-72 in the PEST region: required for interaction with dATP-bound RRM1 and ITPR1. Phosphorylation at Ser-68 by PRKD1 and CAMK4 is required for further phosphorylations by CSNK1A1. Phosphorylation is induced by oxidative stress. Probably phosphorylated by CAMK2A; phosphorylation at Ser-68 may be required for interaction with SLC9A3. Dephosphorylated in response to apoptotic stress conditions which causes translocation of both AHCYL1 and BCL2L10 from mitochondria-associated endoplasmic reticulum membranes and promotes apoptosis. As to expression, expressed in dendritic cells.

Its subcellular location is the endoplasmic reticulum. The protein resides in the cytoplasm. It is found in the cytosol. The protein localises to the apical cell membrane. It localises to the microsome. Multifaceted cellular regulator which coordinates several essential cellular functions including regulation of epithelial HCO3(-) and fluid secretion, mRNA processing and DNA replication. Regulates ITPR1 sensitivity to inositol 1,4,5-trisphosphate, competing for the common binding site and acting as endogenous 'pseudoligand' whose inhibitory activity can be modulated by its phosphorylation status. Promotes the formation of contact points between the endoplasmic reticulum (ER) and mitochondria, facilitating transfer of Ca(2+) from the ER to mitochondria. Under normal cellular conditions, functions cooperatively with BCL2L10 to limit ITPR1-mediated Ca(2+) release but, under apoptotic stress conditions, dephosphorylated which promotes dissociation of both AHCYL1 and BCL2L10 from mitochondria-associated endoplasmic reticulum membranes, inhibits BCL2L10 interaction with ITPR1 and leads to increased Ca(2+) transfer to mitochondria which promotes apoptosis. In the pancreatic and salivary ducts, at resting state, attenuates inositol 1,4,5-trisphosphate-induced calcium release by interacting with ITPR1. When extracellular stimuli induce ITPR1 phosphorylation or inositol 1,4,5-trisphosphate production, dissociates from ITPR1 to interact with CFTR and SLC26A6, mediating their synergistic activation by calcium and cAMP that stimulates the epithelial secretion of electrolytes and fluid. Also activates basolateral SLC4A4 isoform 1 to coordinate fluid and HCO3(-) secretion. Inhibits the effect of STK39 on SLC4A4 and CFTR by recruiting PP1 phosphatase which activates SLC4A4, SLC26A6 and CFTR through dephosphorylation. Mediates the induction of SLC9A3 surface expression produced by Angiotensin-2. Depending on the cell type, activates SLC9A3 in response to calcium or reverses SLC9A3R2-dependent calcium inhibition. May modulate the polyadenylation state of specific mRNAs, both by controlling the subcellular location of FIP1L1 and by inhibiting PAPOLA activity, in response to a stimulus that alters its phosphorylation state. Acts as a (dATP)-dependent inhibitor of ribonucleotide reductase large subunit RRM1, controlling the endogenous dNTP pool and ensuring normal cell cycle progression. In vitro does not exhibit any S-adenosyl-L-homocysteine hydrolase activity. This is S-adenosylhomocysteine hydrolase-like protein 1 from Homo sapiens (Human).